The primary structure comprises 274 residues: Thiazole synthase (274 aa).

The active-site Schiff-base intermediate with DXP is the Lys-115. Residues Gly-176, 202-203, and 224-225 each bind 1-deoxy-D-xylulose 5-phosphate; these read AG and NS.

The protein belongs to the ThiG family. As to quaternary structure, homotetramer. Forms heterodimers with either ThiH or ThiS.

The protein localises to the cytoplasm. The enzyme catalyses [ThiS sulfur-carrier protein]-C-terminal-Gly-aminoethanethioate + 2-iminoacetate + 1-deoxy-D-xylulose 5-phosphate = [ThiS sulfur-carrier protein]-C-terminal Gly-Gly + 2-[(2R,5Z)-2-carboxy-4-methylthiazol-5(2H)-ylidene]ethyl phosphate + 2 H2O + H(+). It participates in cofactor biosynthesis; thiamine diphosphate biosynthesis. Functionally, catalyzes the rearrangement of 1-deoxy-D-xylulose 5-phosphate (DXP) to produce the thiazole phosphate moiety of thiamine. Sulfur is provided by the thiocarboxylate moiety of the carrier protein ThiS. In vitro, sulfur can be provided by H(2)S. This chain is Thiazole synthase, found in Psychrobacter arcticus (strain DSM 17307 / VKM B-2377 / 273-4).